We begin with the raw amino-acid sequence, 200 residues long: Ribonuclease HII (200 aa).

In terms of domain architecture, RNase H type-2 spans 14–200 (ERVAGLDEAG…HRQSFTLFRD (187 aa)). 3 residues coordinate a divalent metal cation: aspartate 20, glutamate 21, and aspartate 112.

This sequence belongs to the RNase HII family. The cofactor is Mn(2+). Mg(2+) is required as a cofactor.

It localises to the cytoplasm. It catalyses the reaction Endonucleolytic cleavage to 5'-phosphomonoester.. Endonuclease that specifically degrades the RNA of RNA-DNA hybrids. The chain is Ribonuclease HII from Salinibacter ruber (strain DSM 13855 / M31).